A 367-amino-acid chain; its full sequence is Glutamate 5-kinase 2 (367 aa).

ATP is bound at residue Lys-10. 3 residues coordinate substrate: Ser-50, Asp-136, and Asn-148. ATP-binding positions include 168-169 and 210-216; these read TD and TGGMATK. The PUA domain occupies 275-353; that stretch reads SGQIVIDAGA…KQIGELLDYD (79 aa).

It belongs to the glutamate 5-kinase family.

Its subcellular location is the cytoplasm. It carries out the reaction L-glutamate + ATP = L-glutamyl 5-phosphate + ADP. The protein operates within amino-acid biosynthesis; L-proline biosynthesis; L-glutamate 5-semialdehyde from L-glutamate: step 1/2. Catalyzes the transfer of a phosphate group to glutamate to form L-glutamate 5-phosphate. This chain is Glutamate 5-kinase 2, found in Pseudoalteromonas translucida (strain TAC 125).